Here is a 647-residue protein sequence, read N- to C-terminus: Homologous recombination OB-fold protein (647 aa).

Residue S47 is modified to Phosphoserine. 3 disordered regions span residues 284–361, 380–399, and 581–631; these read ARGT…GPQG, SRTP…RRFP, and SFLK…DDLD. Asymmetric dimethylarginine is present on residues R285, R295, R329, and R337. The span at 287 to 308 shows a compositional bias: polar residues; it reads TIQSSPQNRFPCQPFQSPSSWL. The span at 319–332 shows a compositional bias: low complexity; that stretch reads TPNSSCSTPSRTSS. Polar residues predominate over residues 380–390; sequence SRTPQQPTHPS. Over residues 618–631 the composition is skewed to acidic residues; it reads ASPEEELPEADDLD.

As to quaternary structure, interacts with MCM8; this interaction is necessary for MCM8-MCM9 helicase complex recruitment to DNA damage sites. Interacts with RPA1; this interaction associates HROB with the RPA complex.

Its subcellular location is the nucleus. It localises to the chromosome. Its function is as follows. DNA-binding protein involved in homologous recombination that acts by recruiting the MCM8-MCM9 helicase complex to sites of DNA damage to promote DNA repair synthesis. The polypeptide is Homologous recombination OB-fold protein (Homo sapiens (Human)).